A 167-amino-acid chain; its full sequence is Keratin-associated protein 1-3 (167 aa).

The protein belongs to the KRTAP type 1 family. Interacts with hair keratins. As to expression, expressed in the middle/upper portions of the hair cortex, in the region termed the keratogenous zone.

In the hair cortex, hair keratin intermediate filaments are embedded in an interfilamentous matrix, consisting of hair keratin-associated proteins (KRTAP), which are essential for the formation of a rigid and resistant hair shaft through their extensive disulfide bond cross-linking with abundant cysteine residues of hair keratins. The matrix proteins include the high-sulfur and high-glycine-tyrosine keratins. The sequence is that of Keratin-associated protein 1-3 (KRTAP1-3) from Homo sapiens (Human).